A 324-amino-acid polypeptide reads, in one-letter code: MTGNAKLIDRVSAINWNRLQDEKDAEVWDRLTGNFWLPEKVPVSNDIPSWGTLTAGEKQLTMRVFTGLTMLDTIQGTVGAVSLIPDALTPHEEAVLTNIAFMESVHAKSYSQIFSTLCSTAEIDDAFRWSEENRNLQRKAEIVLQYYRGDEPLKRKVASTLLESFLFYSGFYLPMYWSSRAKLTNTADMIRLIIRDEAVHGYYIGYKFQRGLALVDDVTRAELKDYTYELLFELYDNEVEYTQDLYDEVGLTEDVKKFLRYNANKALMNLGYEALFPRDETDVNPAILSALSPNADENHDFFSGSGSSYVIGKAVVTEDDDWDF.

Residues glutamate 103 and histidine 106 each contribute to the Fe cation site. Tyrosine 110 is an active-site residue. Fe cation-binding residues include glutamate 163, glutamate 197, and histidine 200.

Belongs to the ribonucleoside diphosphate reductase small chain family. As to quaternary structure, tetramer of two alpha and two beta subunits. The cofactor is Fe cation.

It catalyses the reaction a 2'-deoxyribonucleoside 5'-diphosphate + [thioredoxin]-disulfide + H2O = a ribonucleoside 5'-diphosphate + [thioredoxin]-dithiol. In terms of biological role, provides the precursors necessary for DNA synthesis. Catalyzes the biosynthesis of deoxyribonucleotides from the corresponding ribonucleotides. The protein is Ribonucleoside-diphosphate reductase subunit beta nrdF2 (nrdF2) of Mycobacterium tuberculosis (strain CDC 1551 / Oshkosh).